A 238-amino-acid chain; its full sequence is Snake venom metalloproteinase HF-1 (238 aa).

One can recognise a Peptidase M12B domain in the interval 17-221 (RYIQLVVVAD…YNPQCILNKP (205 aa)). Aspartate 106 contacts Ca(2+). 2 disulfide bridges follow: cysteine 130/cysteine 216 and cysteine 174/cysteine 181. Histidine 158 provides a ligand contact to Zn(2+). Glutamate 159 is an active-site residue. 2 residues coordinate Zn(2+): histidine 162 and histidine 168. Residues cysteine 216 and asparagine 219 each contribute to the Ca(2+) site.

Monomer. Requires Zn(2+) as cofactor. As to expression, expressed by the venom gland.

It is found in the secreted. Its activity is regulated as follows. Inhibited by EDTA and EGTA. Inhibited by serum and antihemorrhagic factors Da2-I and Da2-II from D.albiventris. Not inhibited by PMSF or SBT-I. In terms of biological role, snake venom zinc metalloprotease that is weakly hemorrhagic and has Aalpha, Bbeta fibrinogenolytic activities. Cleaves the Aalpha chain of fibrinogen first, followed by the Bbeta chain and shows no effect on the gamma chain. Has caseinolytic activity. Induces dose-dependent edema. The polypeptide is Snake venom metalloproteinase HF-1 (Bothrops marajoensis (Marajo lancehead)).